Here is a 995-residue protein sequence, read N- to C-terminus: MSAEAADREAATSSRPCTPPQTCWFEFLLEESLLEKHLRKACPDPAPVQLIVQFLEQASKPSVNEQNQVQPPPDNKRNRVLKLLALKVAAHLKWDLDILEKSLSVPVLNMLLNELLCISKVPPGTKHVDMDLSALPPTTAMAILLYNRWAIRTIVQSSFPVKQAKPGPPQLNVMNQMQQEKELTENILKVLKEQAADCILVLEAALRLNKDLYVHTMRTLDLLAVEPGTVNGETENSTAGLKIRTEEMQCQVCYDLGAAYFQQGSTDSAIYENAREKFFRTKELLAEIGSLSLHCTIDEKRLAGYCQACDVLVPSSDNNSQQLTPYSQVHICLRSGSYQEVVQIFIEDNLTFTLPVQFRQSVLRELFQKAQQGNEALDEICFKICVCNTVRDVLEGRTISVQFNQLFLRPNKEKIDFLLEVCSRSINVEKASDSLKGNMAAFLKNVCLGLEDLQYVFMISSHELFITLLKDEERKLLVDQMRKRSPRVNLCIKPVTSFYDIPASASVNIGQLEHQLILSVDPWRIRQILIELHGMTSERQFWTVSNKWEVPSVYSSVILGIKDNLTRDLVYILMAKGLHCSTVKDFPHSKQLFTACLELVTEFSPKLRQVMLNEMLLLDIRTHEAGVGQSGERPPSDLISRVRGYLEMRLPDIPLRQVVAEECVAFMLNWRENEYLTLQVPAFLFQNNPYVKLGQLLAATCKELPGPKESRRTAKDLWEVVVQICSVSNQHKRGNDGRVSLIKQRESTLGIMYRSELLSFIKKLREPLVLTIILSLFVKLHNVREDIVNDITAEHISIWPSSIPNLQSVDFEAVAITVKELVRYTLSINPNNHAWLIIQADIYFATNQHSAALHYYLQAGAVCSDFFNKAVPPDVYTDQVIKRMIKCCSLLNCHTQVAILCQFLREIDYKTAFKSLQEQNSHDAMDSYYDYIWDVTILEYLTYLHHKRGETDKRQIAIKAIGQTELNASNPEEVLQLAAQRRKKKFLQAMAKLYF.

At Thr18 the chain carries Phosphothreonine. Residues 24–29 (WFEFLL) carry the WFEF motif motif. TPR repeat units lie at residues 250 to 288 (CQVC…LAEI), 320 to 356 (SQQL…TLPV), 570 to 603 (VYIL…VTEF), and 833 to 866 (HAWL…CSDF).

It belongs to the Integrator subunit 8 family. As to quaternary structure, component of the Integrator complex, composed of core subunits INTS1, INTS2, INTS3, INTS4, INTS5, INTS6, INTS7, INTS8, INTS9/RC74, INTS10, INTS11/CPSF3L, INTS12, INTS13, INTS14 and INTS15. The core complex associates with protein phosphatase 2A subunits PPP2CA and PPP2R1A, to form the Integrator-PP2A (INTAC) complex.

Its subcellular location is the nucleus. It localises to the chromosome. Its function is as follows. Component of the integrator complex, a multiprotein complex that terminates RNA polymerase II (Pol II) transcription in the promoter-proximal region of genes. The integrator complex provides a quality checkpoint during transcription elongation by driving premature transcription termination of transcripts that are unfavorably configured for transcriptional elongation: the complex terminates transcription by (1) catalyzing dephosphorylation of the C-terminal domain (CTD) of Pol II subunit POLR2A/RPB1 and SUPT5H/SPT5, (2) degrading the exiting nascent RNA transcript via endonuclease activity and (3) promoting the release of Pol II from bound DNA. The integrator complex is also involved in terminating the synthesis of non-coding Pol II transcripts, such as enhancer RNAs (eRNAs), small nuclear RNAs (snRNAs), telomerase RNAs and long non-coding RNAs (lncRNAs). Within the integrator complex, INTS8 is required for the recruitment of protein phosphatase 2A (PP2A) to transcription pause-release checkpoint. The protein is Integrator complex subunit 8 (Ints8) of Mus musculus (Mouse).